The following is a 358-amino-acid chain: Gap junction alpha-5 protein (358 aa).

At M1 to T19 the chain is on the cytoplasmic side. The chain crosses the membrane as a helical span at residues V20–A40. Residues A41–R76 lie on the Extracellular side of the membrane. Residues Y77–M97 traverse the membrane as a helical segment. Topologically, residues H98 to E164 are cytoplasmic. Residues V165–C185 traverse the membrane as a helical segment. Residues R186–N205 lie on the Extracellular side of the membrane. A helical transmembrane segment spans residues V206–L226. Residues Y227–V358 lie on the Cytoplasmic side of the membrane. Disordered stretches follow at residues R242–T262 and S318–V358. S353 and S357 each carry phosphoserine.

It belongs to the connexin family. Alpha-type (group II) subfamily. As to quaternary structure, a connexon is composed of a hexamer of connexins. Abundantly expressed in the lung, also expressed in the kidney and heart.

It localises to the cell membrane. It is found in the cell junction. The protein localises to the gap junction. One gap junction consists of a cluster of closely packed pairs of transmembrane channels, the connexons, through which materials of low MW diffuse from one cell to a neighboring cell. The chain is Gap junction alpha-5 protein (Gja5) from Mus musculus (Mouse).